The chain runs to 435 residues: MTTTTTKKPHVLVIPFPQSGHMVPHLDLTHQILLRGATVTVLVTPKNSSYLDALRSLHSPEHFKTLILPFPSHPCIPSGVESLQQLPLEAIVHMFDALSRLHDPLVDFLSRQPPSDLPDAILGSSFLSPWINKVADAFSIKSISFLPINAHSISVMWAQEDRSFFNDLETATTESYGLVINSFYDLEPEFVETVKTRFLNHHRIWTVGPLLPFKAGVDRGGQSSIPPAKVSAWLDSCPEDNSVVYVGFGSQIRLTAEQTAALAAALEKSSVRFIWAVRDAAKKVNSSDNSVEEDVIPAGFEERVKEKGLVIRGWAPQTMILEHRAVGSYLTHLGWGSVLEGMVGGVMLLAWPMQADHFFNTTLIVDKLRAAVRVGENRDSVPDSDKLARILAESAREDLPERVTLMKLREKAMEAIKEGGSSYKNLDELVAEMCL.

Gln18 provides a ligand contact to UDP. Gln18 lines the UDP-beta-L-rhamnose pocket. His21 serves as the catalytic Proton acceptor. Residue His21 coordinates quercetin. Asp119 functions as the Charge relay in the catalytic mechanism. Residues Ser250, Ala315, His332, Gly336, Ser337, and Glu340 each contribute to the UDP site. UDP-beta-L-rhamnose-binding residues include Ser250, Ala315, His332, Gly336, Ser337, and Glu340.

It belongs to the UDP-glycosyltransferase family. In terms of tissue distribution, highly expressed in floral buds. Expressed in stems, leaves and flowers. Expressed at low levels in roots and siliques. Expressed on the adaxial side of cotyledons and emerging leaves, in trichomes, root columella cells, and the late elongation/early differentiation zone of roots.

The enzyme catalyses quercitrin + UDP-beta-L-rhamnose = quercetin 3,7-bis-O-alpha-L-rhamnoside + UDP + H(+). It carries out the reaction quercetin 3-O-beta-D-glucoside + UDP-beta-L-rhamnose = quercetin 3-O-beta-D-glucoside-7-O-alpha-L-rhamnoside + UDP + H(+). It participates in flavonoid metabolism. Flavonol 7-O-rhamnosyltransferase that catalyzes the transfer of rhamnose from UDP-rhamnose to the 7-OH position of 3-O-glycosylated flavonols, such as kaempferol 3-O-rhamnoside, kaempferol 3-O-glucoside, quercetin 3-O-glucoside, quercetin 3-O-galactoside, quercetin 3-O-rhamnoside and isorhamnetin 3-O-glucoside. Is able to glycosylate the flavonols quercetin and kaempferol to yield quercetin 7-O-rhamnoside and kaempferol 7-O-rhamnoside. Shows a strict specificity for UDP-rhamnose as sugar donor. Does not act on 3-O-glycosylated anthocyanins. The accumulation of kaempferol 3-O-rhamnoside-7-O-rhamnoside inhibits basipetal auxin transport, which influences auxin distribution and plant organ development. This is Flavonol 7-O-rhamnosyltransferase from Arabidopsis thaliana (Mouse-ear cress).